Reading from the N-terminus, the 201-residue chain is NADH-quinone oxidoreductase subunit I (201 aa).

2 4Fe-4S ferredoxin-type domains span residues 78 to 107 (MSYEKAKSRCVACYMCQTACPMPTLFRIEA) and 116 to 147 (KVVRFDMNLLNCLFCGLCVDACPVGCLTMTDI). The [4Fe-4S] cluster site is built by Cys87, Cys90, Cys93, Cys97, Cys127, Cys130, Cys133, and Cys137.

It belongs to the complex I 23 kDa subunit family. In terms of assembly, NDH-1 is composed of 14 different subunits. Subunits NuoA, H, J, K, L, M, N constitute the membrane sector of the complex. It depends on [4Fe-4S] cluster as a cofactor.

It is found in the cell inner membrane. It carries out the reaction a quinone + NADH + 5 H(+)(in) = a quinol + NAD(+) + 4 H(+)(out). Its function is as follows. NDH-1 shuttles electrons from NADH, via FMN and iron-sulfur (Fe-S) centers, to quinones in the respiratory chain. The immediate electron acceptor for the enzyme in this species is believed to be ubiquinone. Couples the redox reaction to proton translocation (for every two electrons transferred, four hydrogen ions are translocated across the cytoplasmic membrane), and thus conserves the redox energy in a proton gradient. This chain is NADH-quinone oxidoreductase subunit I, found in Aquifex aeolicus (strain VF5).